Reading from the N-terminus, the 379-residue chain is Chaperone protein DnaJ (379 aa).

Residues 5-70 (DYYEILGVPK…QKRAAYDQYG (66 aa)) form the J domain. The CR-type zinc-finger motif lies at 134–212 (GVTKEIRIPT…CHGHGRIEKT (79 aa)). Zn(2+) contacts are provided by C147, C150, C164, C167, C186, C189, C200, and C203. CXXCXGXG motif repeat units lie at residues 147–154 (CEVCHGSG), 164–171 (CPTCHGAG), 186–193 (CPHCQGRG), and 200–207 (CNSCHGHG).

Belongs to the DnaJ family. In terms of assembly, homodimer. Requires Zn(2+) as cofactor.

It is found in the cytoplasm. Participates actively in the response to hyperosmotic and heat shock by preventing the aggregation of stress-denatured proteins and by disaggregating proteins, also in an autonomous, DnaK-independent fashion. Unfolded proteins bind initially to DnaJ; upon interaction with the DnaJ-bound protein, DnaK hydrolyzes its bound ATP, resulting in the formation of a stable complex. GrpE releases ADP from DnaK; ATP binding to DnaK triggers the release of the substrate protein, thus completing the reaction cycle. Several rounds of ATP-dependent interactions between DnaJ, DnaK and GrpE are required for fully efficient folding. Also involved, together with DnaK and GrpE, in the DNA replication of plasmids through activation of initiation proteins. This is Chaperone protein DnaJ from Cronobacter sakazakii (strain ATCC BAA-894) (Enterobacter sakazakii).